The primary structure comprises 344 residues: N-acetyl-gamma-glutamyl-phosphate reductase (344 aa).

C150 is a catalytic residue.

It belongs to the NAGSA dehydrogenase family. Type 1 subfamily.

Its subcellular location is the cytoplasm. The enzyme catalyses N-acetyl-L-glutamate 5-semialdehyde + phosphate + NADP(+) = N-acetyl-L-glutamyl 5-phosphate + NADPH + H(+). It participates in amino-acid biosynthesis; L-arginine biosynthesis; N(2)-acetyl-L-ornithine from L-glutamate: step 3/4. Its function is as follows. Catalyzes the NADPH-dependent reduction of N-acetyl-5-glutamyl phosphate to yield N-acetyl-L-glutamate 5-semialdehyde. This chain is N-acetyl-gamma-glutamyl-phosphate reductase, found in Pseudomonas aeruginosa (strain UCBPP-PA14).